We begin with the raw amino-acid sequence, 703 residues long: Protein teflon (703 aa).

A C2H2-type 1 zinc finger spans residues 32-55; sequence MLCHFCKDIFTHLPEFMRHLQWSH. Disordered regions lie at residues 78-111, 140-161, 205-239, and 339-434; these read SSEDDVQSQANSCSSGDSGLAGEMEDADGEPGSS, EQSYSKNPPDSRTEGFRCARKP, NDVSKPRLNKLRSKLNNSLSSNISGPPKQSKMPSL, and SQQP…SKLE. The segment covering 84–94 has biased composition (polar residues); sequence QSQANSCSSGD. Positions 148 to 161 are enriched in basic and acidic residues; the sequence is PDSRTEGFRCARKP. Composition is skewed to polar residues over residues 339 to 352 and 364 to 373; these read SQQPSELNTTNNAV and SLTVISSSPI. 2 consecutive C2H2-type zinc fingers follow at residues 649 to 672 and 677 to 700; these read YFCECCEEIFPNEARYKKHVQSVH and FTCSECGKSFKRLYFYDKHLKTVH.

Belongs to the Teflon family.

It is found in the nucleus. The protein resides in the chromosome. In terms of biological role, specifically required in males for proper segregation of autosomal bivalents at meiosis I. Expression is required in the male germ line prior to spermatocyte stage S4. May have a role as a bridging molecule maintaining adhesion to hold autosome bivalents together via heterochromatic connections. The protein is Protein teflon of Drosophila persimilis (Fruit fly).